A 303-amino-acid chain; its full sequence is Sulfate adenylyltransferase subunit 2 (303 aa).

The segment at 282 to 303 (SGRLIDHDESGSMEKKKREGYF) is disordered.

The protein belongs to the PAPS reductase family. CysD subfamily. As to quaternary structure, heterodimer composed of CysD, the smaller subunit, and CysN.

The enzyme catalyses sulfate + ATP + H(+) = adenosine 5'-phosphosulfate + diphosphate. The protein operates within sulfur metabolism; hydrogen sulfide biosynthesis; sulfite from sulfate: step 1/3. Its function is as follows. With CysN forms the ATP sulfurylase (ATPS) that catalyzes the adenylation of sulfate producing adenosine 5'-phosphosulfate (APS) and diphosphate, the first enzymatic step in sulfur assimilation pathway. APS synthesis involves the formation of a high-energy phosphoric-sulfuric acid anhydride bond driven by GTP hydrolysis by CysN coupled to ATP hydrolysis by CysD. This Maricaulis maris (strain MCS10) (Caulobacter maris) protein is Sulfate adenylyltransferase subunit 2.